We begin with the raw amino-acid sequence, 303 residues long: Sulfate adenylyltransferase subunit 2 (303 aa).

It belongs to the PAPS reductase family. CysD subfamily. As to quaternary structure, heterodimer composed of CysD, the smaller subunit, and CysN.

It carries out the reaction sulfate + ATP + H(+) = adenosine 5'-phosphosulfate + diphosphate. It functions in the pathway sulfur metabolism; hydrogen sulfide biosynthesis; sulfite from sulfate: step 1/3. Functionally, with CysN forms the ATP sulfurylase (ATPS) that catalyzes the adenylation of sulfate producing adenosine 5'-phosphosulfate (APS) and diphosphate, the first enzymatic step in sulfur assimilation pathway. APS synthesis involves the formation of a high-energy phosphoric-sulfuric acid anhydride bond driven by GTP hydrolysis by CysN coupled to ATP hydrolysis by CysD. The sequence is that of Sulfate adenylyltransferase subunit 2 from Phocaeicola vulgatus (strain ATCC 8482 / DSM 1447 / JCM 5826 / CCUG 4940 / NBRC 14291 / NCTC 11154) (Bacteroides vulgatus).